Reading from the N-terminus, the 28-residue chain is 3-phytase B (28 aa).

The tract at residues 1-28 (RDPTGCEVDQVIMVKRHGERYPSPSAGK) is disordered. His17 serves as the catalytic Nucleophile.

It belongs to the histidine acid phosphatase family.

It catalyses the reaction 1D-myo-inositol hexakisphosphate + H2O = 1D-myo-inositol 1,2,4,5,6-pentakisphosphate + phosphate. Its function is as follows. Catalyzes the hydrolysis of inorganic orthophosphate from phytate. In Aspergillus ficuum, this protein is 3-phytase B (phyB).